A 141-amino-acid polypeptide reads, in one-letter code: Small ribosomal subunit protein uS12 (141 aa).

Residues 1–11 (MPTISQLVTTS) show a composition bias toward polar residues. The tract at residues 1–22 (MPTISQLVTTSRQDKNYKSKSP) is disordered. 3-methylthioaspartic acid is present on Asp102.

Belongs to the universal ribosomal protein uS12 family. In terms of assembly, part of the 30S ribosomal subunit. Contacts proteins S8 and S17. May interact with IF1 in the 30S initiation complex.

In terms of biological role, with S4 and S5 plays an important role in translational accuracy. Functionally, interacts with and stabilizes bases of the 16S rRNA that are involved in tRNA selection in the A site and with the mRNA backbone. Located at the interface of the 30S and 50S subunits, it traverses the body of the 30S subunit contacting proteins on the other side and probably holding the rRNA structure together. The combined cluster of proteins S8, S12 and S17 appears to hold together the shoulder and platform of the 30S subunit. This Acholeplasma laidlawii (strain PG-8A) protein is Small ribosomal subunit protein uS12.